The following is a 740-amino-acid chain: Melanoma-associated antigen D4 (740 aa).

Over residues Met-1–Glu-11 the composition is skewed to basic and acidic residues. Disordered regions lie at residues Met-1 to Glu-27, Ala-139 to Thr-208, Pro-242 to Lys-298, and Ile-321 to Pro-377. Acidic residues predominate over residues Asn-14–Glu-27. Composition is skewed to polar residues over residues His-141–Ala-155 and Pro-162–Leu-175. Positions Ala-185–Ser-207 are enriched in low complexity. Low complexity predominate over residues Ile-321–Pro-337. Residues Asp-354–Arg-363 are compositionally biased toward acidic residues. One can recognise an MAGE domain in the interval Leu-414–Ala-612. Residues Trp-697 to Thr-722 are disordered.

In terms of assembly, interacts with TRIM27.

Functionally, may enhance ubiquitin ligase activity of RING-type zinc finger-containing E3 ubiquitin-protein ligases. Proposed to act through recruitment and/or stabilization of the Ubl-conjugating enzyme (E2) at the E3:substrate complex. In Bos taurus (Bovine), this protein is Melanoma-associated antigen D4 (MAGED4).